Consider the following 249-residue polypeptide: Putative [LysW]-aminoadipate/[LysW]-glutamate kinase (249 aa).

Substrate is bound by residues Arg-63 and Asn-166.

Belongs to the acetylglutamate kinase family. LysZ subfamily.

Its subcellular location is the cytoplasm. The enzyme catalyses [amino-group carrier protein]-C-terminal-N-(1,4-dicarboxybutan-1-yl)-L-glutamine + ATP = [amino-group carrier protein]-C-terminal-N-(1-carboxy-5-phosphooxy-5-oxopentan-1-yl)-L-glutamine + ADP. The catalysed reaction is [amino-group carrier protein]-C-terminal-gamma-(L-glutamyl)-L-glutamate + ATP = [amino-group carrier protein]-C-terminal-gamma-(5-phospho-L-glutamyl)-L-glutamate + ADP. It functions in the pathway amino-acid biosynthesis; L-lysine biosynthesis via AAA pathway; L-lysine from L-alpha-aminoadipate (Thermus route): step 2/5. It participates in amino-acid biosynthesis; L-arginine biosynthesis. Functionally, involved in both the arginine and lysine biosynthetic pathways. Phosphorylates the LysW-bound precursors glutamate (for arginine biosynthesis), respectively alpha-aminoadipate (for lysine biosynthesis). The chain is Putative [LysW]-aminoadipate/[LysW]-glutamate kinase from Pyrococcus furiosus (strain ATCC 43587 / DSM 3638 / JCM 8422 / Vc1).